The chain runs to 268 residues: MEKRSSIKNRGVLRLPPGFRFHPTDEELVVQYLRRKVTGLPLPASVIPETDVCKSDPWDLPGDCESEMYFFSTREAKYPNGNRSNRSTGSGYWKATGLDKQIGKKKLVVGMKKTLVFYKGKPPNGTRTNWVLHEYRLVDSQQDSLYGQNMNWVLCRVFLKKRSNSNSKRKEDEKEEVENEKETETEREREEENKKSTCPIFYDFMRKDTKKKRRRRRCCDLNLTPATCCCCSSSTSSSSVCSSALTHTSSNDNRQEISYRENKFCLFL.

In terms of domain architecture, NAC spans 15–160; the sequence is LPPGFRFHPT…NWVLCRVFLK (146 aa). A DNA-binding region spans residues 109 to 166; that stretch reads VGMKKTLVFYKGKPPNGTRTNWVLHEYRLVDSQQDSLYGQNMNWVLCRVFLKKRSNSN. The segment at 166–190 is disordered; that stretch reads NSKRKEDEKEEVENEKETETERERE. Basic and acidic residues predominate over residues 180–190; the sequence is EKETETERERE.

It localises to the nucleus. In terms of biological role, transcription activator of the mannan synthase CSLA9. Recognizes and binds to DNA-specific sequence of CSLA9 promoter. In Arabidopsis thaliana (Mouse-ear cress), this protein is NAC domain-containing protein 41.